The primary structure comprises 217 residues: Ras-related protein Rab-39A (217 aa).

S17, G20, K21, S22, C23, and T44 together coordinate GTP. S22 is a Mg(2+) binding site. A switch-I region spans residues 39-47 (PACDPTVGV). T44 and D68 together coordinate Mg(2+). GTP is bound by residues G71, H127, K128, D130, A158, and K159. The tract at residues 71 to 87 (GQERFRSITRSYYRNSV) is switch-II. 2 S-geranylgeranyl cysteine lipidation sites follow: C215 and C217. Cysteine methyl ester is present on C217.

Belongs to the small GTPase superfamily. Rab family. As to quaternary structure, interacts (GDP-bound) with C9orf72; C9orf72 acts as a GEF for RAB39A. Interacts (GTP-bound) with HOPS complex components VPS39 and VPS41, and STX17; interaction between HOPS components and RAB39A contributes to obtaining a functional HOPS complex that promotes membrane fusion driven by STX17-SNAP29-VAMP8. Interacts with BECN1. Probably associates with the PI3K (PI3KC3/PI3K-III/class III phosphatidylinositol 3-kinase) complex. Interacts with UACA. Interacts with isoform a of RASSF1. Does not interact with isoform c of RASSF1. It depends on Mg(2+) as a cofactor. Post-translationally, prenylated. Prenylation is required for association with cellular membranes.

The protein localises to the cell membrane. The protein resides in the cytoplasmic vesicle. Its subcellular location is the phagosome membrane. It is found in the lysosome membrane. It localises to the autolysosome membrane. It carries out the reaction GTP + H2O = GDP + phosphate + H(+). Regulated by guanine nucleotide exchange factors (GEFs) including c9Orf72, which promote the exchange of bound GDP for free GTP. Regulated by GTPase activating proteins (GAPs) which increase the GTP hydrolysis activity. Inhibited by GDP dissociation inhibitors (GDIs). Functionally, the small GTPases Rab are key regulators of intracellular membrane trafficking, from the formation of transport vesicles to their fusion with membranes. Rabs cycle between an inactive GDP-bound form and an active GTP-bound form that is able to recruit to membranes different sets of downstream effectors directly responsible for vesicle formation, movement, tethering and fusion. RAB39A regulates autophagosome-lysosome fusion via recruitment of the HOPS endosomal tethering complex onto lysosomes; this process involves lysosomal RAB39A and autophagosomal RAB2A recruitment of HOPS subcomplexes VPS41-VPS16-VPS18-VPS33A and VPS39-VPS11, respectively, which assemble into a functional complex to mediate membrane tethering and SNAREs-driven membrane fusion. Also negatively regulates lipopolysaccharide (LPS)-induced autophagosome formation in macrophages, possibly by implicating PI3K. Promotes the delivery of MHC-I molecules from the ER to phagosomes and the generation of peptide-loaded MHC-I complexes in phagosomes, thus enhancing antigen cross-presentation by dendritic cells. Plays a role in the maturation and acidification of phagosomes that engulf pathogens, such as S.aureus and M.tuberculosis. Plays a role in the fusion of phagosomes with lysosomes. May be involved in multiple neurite formation. This is Ras-related protein Rab-39A from Homo sapiens (Human).